The primary structure comprises 146 residues: Large ribosomal subunit protein uL15 (146 aa).

The tract at residues 1–54 (MTLRLNELAPAEGAKRDNRRLGRGIGSGVGKTGGRGVKGQKSRKSGGVRPGFEG) is disordered. A compositionally biased stretch (gly residues) spans 23–37 (RGIGSGVGKTGGRGV).

It belongs to the universal ribosomal protein uL15 family. In terms of assembly, part of the 50S ribosomal subunit.

Its function is as follows. Binds to the 23S rRNA. The protein is Large ribosomal subunit protein uL15 of Acinetobacter baylyi (strain ATCC 33305 / BD413 / ADP1).